A 221-amino-acid polypeptide reads, in one-letter code: Urease accessory protein UreF (221 aa).

It belongs to the UreF family. UreD, UreF and UreG form a complex that acts as a GTP-hydrolysis-dependent molecular chaperone, activating the urease apoprotein by helping to assemble the nickel containing metallocenter of UreC. The UreE protein probably delivers the nickel.

It is found in the cytoplasm. In terms of biological role, required for maturation of urease via the functional incorporation of the urease nickel metallocenter. The polypeptide is Urease accessory protein UreF (Aliivibrio fischeri (strain ATCC 700601 / ES114) (Vibrio fischeri)).